The following is a 470-amino-acid chain: Negative regulator of sexual conjugation and meiosis (470 aa).

One can recognise a Protein kinase domain in the interval 18-295 (LRFVSIIGAG…ITLPELSTLV (278 aa)). Residues 24–32 (IGAGAYGVV) and lysine 47 contribute to the ATP site. Aspartate 143 acts as the Proton acceptor in catalysis. Serine 469 carries the phosphoserine modification.

Belongs to the protein kinase superfamily. Ser/Thr protein kinase family.

The catalysed reaction is L-seryl-[protein] + ATP = O-phospho-L-seryl-[protein] + ADP + H(+). The enzyme catalyses L-threonyl-[protein] + ATP = O-phospho-L-threonyl-[protein] + ADP + H(+). Functionally, this protein is a negative regulator of both sexual conjugation and meiosis. It phosphorylates mei2. It blocks the onset of meiosis until conjugation takes place. The polypeptide is Negative regulator of sexual conjugation and meiosis (ran1) (Schizosaccharomyces pombe (strain 972 / ATCC 24843) (Fission yeast)).